Here is a 27-residue protein sequence, read N- to C-terminus: HSDGTFTSELSRLRESARLQRLLQGLV.

Valine 27 is subject to Valine amide.

Belongs to the glucagon family.

It is found in the secreted. Hormone involved in different processes, such as regulation of the pH of the duodenal content, food intake and water homeostasis. Exerts its biological effects by binding to secretin receptor (SCTR), a G-protein coupled receptor expressed in the basolateral domain of several cells. Acts as a key gastrointestinal hormone by regulating the pH of the duodenal content. Secreted by S cells of the duodenum in the crypts of Lieberkuehn and regulates the pH of the duodenum by (1) inhibiting the secretion of gastric acid from the parietal cells of the stomach and (2) stimulating the production of bicarbonate (NaHCO(3)) from the ductal cells of the pancreas. Production of bicarbonate is essential to neutralize the pH and ensure no damage is done to the small intestine by the gastric acid. In addition to regulating the pH of the duodenal content, plays a central role in diet induced thermogenesis: acts as a non-sympathetic brown fat (BAT) activator mediating prandial thermogenesis, which consequentially induces satiation. Mechanistically, secretin released by the gut after a meal binds to secretin receptor (SCTR) in brown adipocytes, activating brown fat thermogenesis by stimulating lipolysis, which is sensed in the brain and promotes satiation. Also able to stimulate lipolysis in white adipocytes. Also plays an important role in cellular osmoregulation: released into the systemic circulation in response to hyperosmolality and acts at different levels in the hypothalamus, pituitary and kidney to regulate water homeostasis. Also plays a role in the central nervous system, possibly by acting as a neuropeptide hormone: required for hippocampal synaptic function and neural progenitor cells maintenance. The sequence is that of Secretin from Canis lupus familiaris (Dog).